A 974-amino-acid chain; its full sequence is Exocyst complex component 4 (974 aa).

The residue at position 2 (Ala2) is an N-acetylalanine. Lys9 is modified (N6-acetyllysine). Phosphoserine is present on residues Ser32 and Ser226. The stretch at 32–114 (STSDDVEDRE…HCKRDELRKL (83 aa)) forms a coiled coil. Thr233 and Thr237 each carry phosphothreonine. Ser468 carries the post-translational modification Phosphoserine.

This sequence belongs to the SEC8 family. In terms of assembly, the exocyst complex is composed of EXOC1, EXOC2, EXOC3, EXOC4, EXOC5, EXOC6, EXOC7 and EXOC8. Interacts with BIRC6/bruce. Interacts with MYRIP. Interacts with SH3BP1; required for the localization of both SH3BP1 and the exocyst to the leading edge of migrating cells. Interacts with SLC6A9.

The protein resides in the midbody. Its subcellular location is the midbody ring. It localises to the cell projection. It is found in the cytoplasm. The protein localises to the cytoskeleton. The protein resides in the microtubule organizing center. Its subcellular location is the centrosome. Its function is as follows. Component of the exocyst complex involved in the docking of exocytic vesicles with fusion sites on the plasma membrane. This is Exocyst complex component 4 (EXOC4) from Homo sapiens (Human).